Consider the following 367-residue polypeptide: Testis-specific serine/threonine-protein kinase 1 (367 aa).

In terms of domain architecture, Protein kinase spans 12–272; it reads YLLGINLGEG…IDEILSHCWM (261 aa). Residues 18–26 and K41 contribute to the ATP site; that span reads LGEGSYAKV. D136 functions as the Proton acceptor in the catalytic mechanism. T174 carries the post-translational modification Phosphothreonine. The disordered stretch occupies residues 276 to 367; sequence ARGSPSVAIN…PQQPPETRAQ (92 aa). A compositionally biased stretch (basic and acidic residues) spans 303-314; it reads GSDKKSATKLEP.

The protein belongs to the protein kinase superfamily. CAMK Ser/Thr protein kinase family. In terms of assembly, interacts with TSSK2. Interacts with HSP90; this interaction stabilizes TSSK1. Mg(2+) is required as a cofactor. Autophosphorylated. Post-translationally, ubiquitinated; HSP90 activity negatively regulates ubiquitination and degradation. In terms of tissue distribution, testis-specific. Present in sperm (at protein level).

The protein resides in the cytoplasm. It localises to the cytoplasmic vesicle. It is found in the secretory vesicle. The protein localises to the acrosome. Its subcellular location is the cell projection. The protein resides in the cilium. It localises to the flagellum. The enzyme catalyses L-seryl-[protein] + ATP = O-phospho-L-seryl-[protein] + ADP + H(+). The catalysed reaction is L-threonyl-[protein] + ATP = O-phospho-L-threonyl-[protein] + ADP + H(+). Its activity is regulated as follows. Kinase activity is specifically inhibited by 2 classes of compounds: biphenyl compounds (1,1'-(biphenyl-4,4'-diyl)bis(2,2-dihydroxyethanone)) and 1,2,7-trialky-1H-imidazo[4,5-g]quinoxalin-6-one. Activated by phosphorylation on Thr-174 and potentially by autophosphorylation. Testis-specific serine/threonine-protein kinase required during spermatid development. Phosphorylates 'Ser-288' of TSKS. Involved in the late stages of spermatogenesis, during the reconstruction of the cytoplasm. During spermatogenesis, required for the transformation of a ring-shaped structure around the base of the flagellum originating from the chromatoid body. This chain is Testis-specific serine/threonine-protein kinase 1 (TSSK1B), found in Homo sapiens (Human).